The primary structure comprises 218 residues: Riboflavin synthase (218 aa).

Lumazine-binding repeat units lie at residues 1–97 (MFTG…FGGH) and 98–194 (IVSG…ERLL). 2,4-dihydroxypteridine-binding positions include 4–6 (GII), 48–50 (CLT), 62–67 (DLSIET), 101–103 (GHV), K136, 145–147 (SLT), and 159–164 (TIVPHT).

Homotrimer.

It catalyses the reaction 2 6,7-dimethyl-8-(1-D-ribityl)lumazine + H(+) = 5-amino-6-(D-ribitylamino)uracil + riboflavin. The protein operates within cofactor biosynthesis; riboflavin biosynthesis; riboflavin from 2-hydroxy-3-oxobutyl phosphate and 5-amino-6-(D-ribitylamino)uracil: step 2/2. Its function is as follows. Catalyzes the dismutation of two molecules of 6,7-dimethyl-8-ribityllumazine, resulting in the formation of riboflavin and 5-amino-6-(D-ribitylamino)uracil. The protein is Riboflavin synthase of Photobacterium phosphoreum.